Reading from the N-terminus, the 770-residue chain is MAQWNQLQQLDTRYLEQLHQLYSDSFPMELRQLLAPWIESQDWAYAASKESHATLVFHNLLGEIDQQYSRFLQESNVLYQHNLRRIKQFLQSRYLEKPMEIARIVARCLWEESRLLQTAATAAQQGGQANHPTAAVVTEKQQMLEQHLQDVRKRVQDLEQKMKVVENLLDDFDFNYKTLKSQGDMQDLNGNNQSVTRQKMQQLEQMLTALDQMRRSIVSELAGLLSAMEYVQKTLTDEELADWKRRQQIACIGGPPNICLDRLENWITSLAESQLQTRQQIKKLEELQQKVSYKGDPIVQHRPMLEERIVELFRNLMKSAFVVERQPCMPMHPDRPLVIKTGVQFTTKVRLLVKFPELNYQLKIKVCIDKDSGDVAALRGSRKFNILGTNTKVMNMEESNNGSLSAEFKHLTLREQRCGNGGRANCDASLIVTEELHLITFETEVYHQGLKIDLETHSLPVVVISNICQMPNAWASILWYNMLTNNPKNVNFFTKPPIGTWDQVAEVLSWQFSSTTKRGLSIEQLTTLAEKLLGPGVNYSGCQITWAKFCKENMAGKGFSFWVWLDNIIDLVKKYILALWNEGYIMGFISKERERAILSTKPPGTCLLRFSESSKEGGVTFTWVEKDISGKTQIQSVEPYTKQQLNNMSFAEIIMGYKIMDATNILVSPLVYLYPDIPKEDAFGKYCRPESQEHPEADPGSAAPYLKTKFICVTPTTCSNTIDLPMSPRTLDSLMQFGNNGEAAEPSAGGQFESLTFDMELTSECATSPM.

Ala-2 is modified (N-acetylalanine). Residues Lys-49 and Lys-87 each carry the N6-acetyllysine modification. Positions 150-162 (DVRKRVQDLEQKM) match the Essential for nuclear import motif. The 91-residue stretch at 580–670 (WNEGYIMGFI…DATNILVSPL (91 aa)) folds into the SH2 domain. Allysine; alternate is present on residues Lys-601, Lys-615, and Lys-631. 3 positions are modified to N6-acetyllysine; alternate: Lys-601, Lys-615, and Lys-631. The residue at position 640 (Tyr-640) is a Phosphotyrosine; by TYK2. The residue at position 685 (Lys-685) is an Allysine; alternate. Residue Lys-685 is modified to N6-acetyllysine; alternate. A Phosphotyrosine; by FER and PTK6 modification is found at Tyr-705. The residue at position 707 (Lys-707) is an N6-acetyllysine. The residue at position 714 (Thr-714) is a Phosphothreonine. Ser-727 carries the post-translational modification Phosphoserine; by DYRK2, NLK, NEK6, IRAK1, RPS6KA5, ZIPK/DAPK3 and PKC/PRKCE.

This sequence belongs to the transcription factor STAT family. Forms a homodimer or a heterodimer with a related family member (at least STAT1). Component of a promoter-binding complex composed of STAT3, NFATC3 and NFATC4; complex formation is enhanced by calcineurin. Interacts with IL31RA, NCOA1, PELP1, SIPAR, SOCS7, STATIP1 and TMF1. Interacts with IL23R in presence of IL23. Interacts (via SH2 domain) with NLK. Interacts with ARL2BP; the interaction is enhanced by LIF and JAK1 expression. Interacts with KPNA4 and KPNA5; KPNA4 may be the primary mediator of nuclear import. Interacts with CAV2; the interaction is increased on insulin-induced tyrosine phosphorylation of CAV2 and leads to STAT3 activation. Interacts with ARL2BP; interaction is enhanced with ARL2. Interacts with NEK6. Binds to CDK9 when activated and nuclear. Interacts with BMX. Interacts with ZIPK/DAPK3. Interacts with PIAS3; the interaction occurs on stimulation by IL6, CNTF or OSM and inhibits the DNA binding activity of STAT3. In prostate cancer cells, interacts with PRKCE and promotes DNA binding activity of STAT3. Interacts with STMN3, antagonizing its microtubule-destabilizing activity. Interacts with the 'Lys-129' acetylated form of BIRC5/survivin. Interacts with FER. Interacts (via SH2 domain) with EIF2AK2/PKR (via the kinase catalytic domain). Interacts with FGFR4. Interacts with INPP5F; the interaction is independent of STAT3 Tyr-705 phosphorylation status. Interacts with OCIAD1 and OCIAD2. Interacts (unphosphorylated or phosphorylated at Ser-727) with PHB1. Interacts and may form heterodimers with NHLH1. Found in a complex with SLC39A6, SLC39A10 and with the 'Ser-727' phosphorylated form of STAT3 throughout mitosis. Interacts (when acetylated) with EP300 (via bromo domain); interaction takes place following STAT3 acetylation by EP300 and promotes enhanceosome assembly. Interacts (when acetylated) with BRD2 (via bromo domain); interaction promotes STAT3 recruitment to chromatin and T-helper Th17 cell differentiation. Interacts with FAM220A/SIPAR; the interaction occurs in both the nucleus and the cytoplasm, is enhanced by IL6 and promotes STAT3 dephosphorylation. Interacts in both unphosphorylated and phosphorylated forms with FAM220A but interacts preferentially in the phosphorylated form in the nucleus. Interacts with PTPN2; the interaction is promoted by FAM220A and leads to STAT3 dephosphorylation which negatively regulates STAT3 transcriptional activator activity. In terms of processing, activated through tyrosine phosphorylation by BMX. Tyrosine phosphorylated in response to IL-6, IL-11, CNTF, LIF, CSF-1, EGF, PDGF, IFN-alpha and OSM. Tyrosine phosphorylated in response to constitutively activated FGFR1, FGFR2, FGFR3 and FGFR4. Phosphorylated on serine upon DNA damage, probably by ATM or ATR. Serine phosphorylation is important for the formation of stable DNA-binding STAT3 homodimers and maximal transcriptional activity. ARL2BP may participate in keeping the phosphorylated state of STAT3 within the nucleus. Tyrosine phosphorylated upon stimulation with EGF. Upon LPS challenge, phosphorylated within the nucleus by IRAK1. Phosphorylated on Ser-727 by RPS6KA5. Dephosphorylation on tyrosine residues by PTPN2 negatively regulates IL6/interleukin-6 signaling. Phosphorylation at Tyr-705 by FER, isoform M2 of PKM (PKM2) or PTK6 leads to an increase of its transcriptional activity. Phosphorylation at Tyr-705 is increased in the presence of calcineurin. Phosphorylation at Tyr-640 by TYK2 negatively regulates transcriptional activity. Acetylated on lysine residues by EP300/p300, promoting its activation. Acetylation at Lys-49 and Lys-87 by EP300/p300 promotes its activation. Acetylation at Lys-87 by EP300/p300 promotes its association with BRD2 and recruitment to chromatin. Deacetylated at Lys-49 and Lys-87 by HDAC1. Acetylation at Lys-685 by EP300/p300 promotes its homodimerization and activation. Deacetylated at Lys-685 by HDAC3. Acetylated on lysine residues by CREBBP. Deacetylation by LOXL3 leads to disrupt STAT3 dimerization and inhibit STAT3 transcription activity. Oxidation of lysine residues to allysine on STAT3 preferentially takes place on lysine residues that are acetylated. Post-translationally, some lysine residues are oxidized to allysine by LOXL3, leading to disrupt STAT3 dimerization and inhibit STAT3 transcription activity. Oxidation of lysine residues to allysine on STAT3 preferentially takes place on lysine residues that are acetylated.

Its subcellular location is the cytoplasm. It localises to the nucleus. Functionally, signal transducer and transcription activator that mediates cellular responses to interleukins, KITLG/SCF, LEP and other growth factors. Once activated, recruits coactivators, such as NCOA1 or MED1, to the promoter region of the target gene. May mediate cellular responses to activated FGFR1, FGFR2, FGFR3 and FGFR4. Upon activation of IL6ST/gp130 signaling by interleukin-6 (IL6), binds to the IL6-responsive elements identified in the promoters of various acute-phase protein genes. Activated by IL31 through IL31RA. Acts as a regulator of inflammatory response by regulating differentiation of naive CD4(+) T-cells into T-helper Th17 or regulatory T-cells (Treg): acetylation promotes its transcription activity and cell differentiation while deacetylation and oxidation of lysine residues by LOXL3 inhibits differentiation. Involved in cell cycle regulation by inducing the expression of key genes for the progression from G1 to S phase, such as CCND1. Mediates the effects of LEP on melanocortin production, body energy homeostasis and lactation. May play an apoptotic role by transctivating BIRC5 expression under LEP activation. Cytoplasmic STAT3 represses macroautophagy by inhibiting EIF2AK2/PKR activity. Plays a crucial role in basal beta cell functions, such as regulation of insulin secretion. Following JAK/STAT signaling activation and as part of a complex with NFATC3 and NFATC4, binds to the alpha-beta E4 promoter region of CRYAB and activates transcription in cardiomyocytes. Plays an important role in host defense in methicillin-resistant S.aureus lung infection by regulating the expression of the antimicrobial lectin REG3G. The chain is Signal transducer and activator of transcription 3 (STAT3) from Bos taurus (Bovine).